A 79-amino-acid polypeptide reads, in one-letter code: Protein S100-G (79 aa).

Ser-2 bears the N-acetylserine mark. 2 consecutive EF-hand domains span residues 13-48 and 45-79; these read IFEK…KGPN and KGPN…KISQ. Ca(2+) is bound by residues Gln-26 and Glu-31. Ser-42 is subject to Phosphoserine. The Ca(2+) site is built by Asp-58, Asn-60, Asp-62, Glu-64, and Glu-69.

It belongs to the S-100 family.

This is Protein S100-G (S100G) from Homo sapiens (Human).